Consider the following 63-residue polypeptide: Large ribosomal subunit protein uL29 (63 aa).

Belongs to the universal ribosomal protein uL29 family.

This is Large ribosomal subunit protein uL29 from Caulobacter vibrioides (strain ATCC 19089 / CIP 103742 / CB 15) (Caulobacter crescentus).